Here is a 659-residue protein sequence, read N- to C-terminus: Probable acyl-coenzyme A oxidase acox-1.5 (659 aa).

FAD-binding positions include 148-151 (YAQT), 156-157 (GT), and glycine 190. Substrate-binding positions include 284–287 (KVGY) and arginine 294. FAD contacts are provided by residues arginine 319 and 339–342 (QQYR). Residues histidine 395 and glutamine 403 each contribute to the ATP site. Glycine 410 serves as a coordination point for FAD. Substrate is bound at residue 432–433 (YE). The Proton acceptor role is filled by glutamate 433. Glutamate 435 is a binding site for FAD. 524 to 527 (KAAR) is an ATP binding site. A Microbody targeting signal motif is present at residues 657–659 (SKL).

This sequence belongs to the acyl-CoA oxidase family. Homodimer. FAD is required as a cofactor.

It is found in the peroxisome. The protein operates within lipid metabolism; peroxisomal fatty acid beta-oxidation. With respect to regulation, activated by ATP. ATP binding leads to a conformational change that promotes FAD cofactor binding and enzyme activity. ATP binding likely occurs during acox-1.5 folding and/or dimer formation. Involved in the first step of peroxisomal beta-oxidation by catalyzing the desaturation of fatty acid-derived side chains. The chain is Probable acyl-coenzyme A oxidase acox-1.5 from Caenorhabditis elegans.